The primary structure comprises 115 residues: Disintegrin EC6 subunit alpha (115 aa).

Positions methionine 1–serine 20 are cleaved as a signal peptide. A propeptide spanning residues isoleucine 21–methionine 47 is cleaved from the precursor. Residues asparagine 48–lysine 112 form the Disintegrin domain. 4 disulfides stabilise this stretch: cysteine 53–cysteine 76, cysteine 67–cysteine 73, cysteine 72–cysteine 97, and cysteine 85–cysteine 104. The short motif at methionine 89 to aspartate 91 is the Cell attachment site; atypical (MLD) element.

It belongs to the disintegrin family. Dimeric disintegrin subfamily. In terms of assembly, heterodimer with subunit beta; disulfide-linked. In terms of tissue distribution, expressed by the venom gland.

Its subcellular location is the secreted. Functionally, potently inhibits adhesion of alpha-4/beta-1 (ITGA4/ITGB1) and alpha-9/beta-1 (ITGA9/ITGB1) integrins to VCAM1, and adhesion of alpha-5/beta-1 (ITGA5/ITGB1) integrin to fibronectin. Has a much less effect on alpha-IIb/beta-3 (ITGA2B/ITGB3) integrin. Also potently inhibits neutrophil migration across TNF-alpha-activated human umbilical endothelial cells. This is Disintegrin EC6 subunit alpha from Echis carinatus sochureki (Saw-scaled viper).